The chain runs to 854 residues: Valine--tRNA ligase (854 aa).

Residues 46 to 56 (PTVSGDLHIGH) carry the 'HIGH' region motif. Positions 551–555 (KMSKS) match the 'KMSKS' region motif. ATP is bound at residue K554.

This sequence belongs to the class-I aminoacyl-tRNA synthetase family. ValS type 2 subfamily. Monomer.

It localises to the cytoplasm. It carries out the reaction tRNA(Val) + L-valine + ATP = L-valyl-tRNA(Val) + AMP + diphosphate. Functionally, catalyzes the attachment of valine to tRNA(Val). As ValRS can inadvertently accommodate and process structurally similar amino acids such as threonine, to avoid such errors, it has a 'posttransfer' editing activity that hydrolyzes mischarged Thr-tRNA(Val) in a tRNA-dependent manner. This chain is Valine--tRNA ligase, found in Orientia tsutsugamushi (strain Boryong) (Rickettsia tsutsugamushi).